Here is a 162-residue protein sequence, read N- to C-terminus: Deoxyuridine 5'-triphosphate nucleotidohydrolase (162 aa).

Belongs to the dUTPase family. In terms of assembly, homotrimer. Requires Mg(2+) as cofactor.

The protein resides in the host cytoplasm. Its subcellular location is the virion. It carries out the reaction dUTP + H2O = dUMP + diphosphate + H(+). Its function is as follows. The viral dUTPase may play a role in lowering the dUTP concentration in natural infections to minimize misincorporation of deoxyuridine into the viral DNA and ensure the fidelity of genome replication. The protein is Deoxyuridine 5'-triphosphate nucleotidohydrolase of Ornithodoros (relapsing fever ticks).